The primary structure comprises 500 residues: Type-2 serine--tRNA ligase (500 aa).

A305 lines the L-serine pocket. C307 provides a ligand contact to Zn(2+). Residue R337 participates in L-serine binding. ATP contacts are provided by residues 337 to 339 (RYE) and 348 to 349 (RV). Residues 354-356 (RIE) and Q401 each bind L-serine. E356 is a Zn(2+) binding site. E430 contacts ATP. N433 contributes to the L-serine binding site. C459 lines the Zn(2+) pocket. Residue R466 participates in ATP binding.

It belongs to the class-II aminoacyl-tRNA synthetase family. Type-2 seryl-tRNA synthetase subfamily. Homodimer. Requires Zn(2+) as cofactor.

It is found in the cytoplasm. The catalysed reaction is tRNA(Ser) + L-serine + ATP = L-seryl-tRNA(Ser) + AMP + diphosphate + H(+). The enzyme catalyses tRNA(Sec) + L-serine + ATP = L-seryl-tRNA(Sec) + AMP + diphosphate + H(+). Its pathway is aminoacyl-tRNA biosynthesis; selenocysteinyl-tRNA(Sec) biosynthesis; L-seryl-tRNA(Sec) from L-serine and tRNA(Sec): step 1/1. Its function is as follows. Catalyzes the attachment of serine to tRNA(Ser). Is also able to aminoacylate tRNA(Sec) with serine, to form the misacylated tRNA L-seryl-tRNA(Sec), which will be further converted into selenocysteinyl-tRNA(Sec). The chain is Type-2 serine--tRNA ligase from Methanothrix thermoacetophila (strain DSM 6194 / JCM 14653 / NBRC 101360 / PT) (Methanosaeta thermophila).